The following is a 434-amino-acid chain: Putative nuclease OPG089 (434 aa).

This sequence belongs to the XPG/RAD2 endonuclease family. FEN1 subfamily. Requires Mg(2+) as cofactor.

The protein resides in the virion. In terms of biological role, putative nuclease that seems to be required for double-strand break repair, homologous recombination, and production of full-length viral genomic DNA. The sequence is that of Putative nuclease OPG089 (OPG089) from Monkeypox virus.